The sequence spans 480 residues: Type II methyltransferase M.NspV (480 aa).

Belongs to the methyltransferase superfamily.

Functionally, a gamma subtype methylase that recognizes the double-stranded sequence 5'-TTCGAA-3', and methylates it on an unknown base to protect it against the NspV endonuclease. This chain is Type II methyltransferase M.NspV, found in Nostoc sp. (strain ATCC 29411 / PCC 7524).